Reading from the N-terminus, the 295-residue chain is Tyrosine recombinase XerD (295 aa).

In terms of domain architecture, Core-binding (CB) spans 1–85 (MNTIIEEYLN…TIRSFHQFAL (85 aa)). Positions 106–289 (KLPDVLEIDE…SKSQIRKMYT (184 aa)) constitute a Tyr recombinase domain. Residues arginine 146, lysine 170, histidine 241, arginine 244, and histidine 267 contribute to the active site. Catalysis depends on tyrosine 276, which acts as the O-(3'-phospho-DNA)-tyrosine intermediate.

It belongs to the 'phage' integrase family. XerD subfamily. Forms a cyclic heterotetrameric complex composed of two molecules of XerC and two molecules of XerD.

It localises to the cytoplasm. Functionally, site-specific tyrosine recombinase, which acts by catalyzing the cutting and rejoining of the recombining DNA molecules. The XerC-XerD complex is essential to convert dimers of the bacterial chromosome into monomers to permit their segregation at cell division. It also contributes to the segregational stability of plasmids. The sequence is that of Tyrosine recombinase XerD from Staphylococcus epidermidis (strain ATCC 12228 / FDA PCI 1200).